The primary structure comprises 76 residues: Small ribosomal subunit protein bS18 (76 aa).

The protein belongs to the bacterial ribosomal protein bS18 family. As to quaternary structure, part of the 30S ribosomal subunit. Forms a tight heterodimer with protein bS6.

Binds as a heterodimer with protein bS6 to the central domain of the 16S rRNA, where it helps stabilize the platform of the 30S subunit. The protein is Small ribosomal subunit protein bS18 of Xylella fastidiosa (strain 9a5c).